The sequence spans 990 residues: Presequence protease, mitochondrial (990 aa).

The transit peptide at 1-56 directs the protein to the mitochondrion; it reads MLRFQRTVPRVAIRRLANVYSEGAVLHGYKVRRAQEIPEMRMAAVELEHEMTGARH. A Zn(2+)-binding site is contributed by His84. Glu87 functions as the Proton acceptor in the catalytic mechanism. His88 provides a ligand contact to Zn(2+). Glu160 is a catalytic residue. Residue Glu185 participates in Zn(2+) binding.

The protein belongs to the peptidase M16 family. PreP subfamily. As to quaternary structure, monomer and homodimer; homodimerization is induced by binding of the substrate. The cofactor is Zn(2+).

The protein localises to the mitochondrion intermembrane space. It is found in the mitochondrion matrix. Degrades mitochondrial transit peptides after their cleavage in the intermembrane space or in the matrix, and presequence peptides; clearance of these peptides is required to keep the presequence processing machinery running. Preferentially cleaves the N-terminal side of paired basic amino acid residues. Also degrades other unstructured peptides. May function as an ATP-dependent peptidase as opposed to a metalloendopeptidase. In Eremothecium gossypii (strain ATCC 10895 / CBS 109.51 / FGSC 9923 / NRRL Y-1056) (Yeast), this protein is Presequence protease, mitochondrial (CYM1).